Reading from the N-terminus, the 362-residue chain is Adenosine deaminase (362 aa).

Residues His41 and His43 each contribute to the Zn(2+) site. 43–45 (HLD) contacts a purine D-ribonucleoside. The gating helix loop; regulates binding affinity for substrates and thus substrate selectivity stretch occupies residues 169-183 (IGETGISEESLRKAA). Position 200 (Gly200) interacts with a purine D-ribonucleoside. His225 serves as a coordination point for Zn(2+). Glu228, His252, and Asp309 together coordinate a purine D-ribonucleoside. Asp309 contacts Zn(2+).

The protein belongs to the metallo-dependent hydrolases superfamily. Adenosine and AMP deaminases family. It depends on Zn(2+) as a cofactor.

The enzyme catalyses adenosine + H2O + H(+) = inosine + NH4(+). It participates in purine metabolism; purine nucleoside salvage. Its activity is regulated as follows. Inhibited by coformycin but not by methylthiocoformycin (MT-coformycin). Catalyzes the hydrolytic deamination of adenosine to produce inosine. Unlike other Plasmodium adenosine deaminases, does not catalyze the deamination of 5'-methylthioadenosine (MTA). Plays an essential role in the purine salvage pathway which allows the parasite to use host cell purines for the synthesis of nucleic acids. This Plasmodium gallinaceum protein is Adenosine deaminase.